The chain runs to 187 residues: UPF0301 protein Clim_0777 (187 aa).

Belongs to the UPF0301 (AlgH) family.

The protein is UPF0301 protein Clim_0777 of Chlorobium limicola (strain DSM 245 / NBRC 103803 / 6330).